We begin with the raw amino-acid sequence, 353 residues long: Sulfate/thiosulfate import ATP-binding protein CysA (353 aa).

An ABC transporter domain is found at 3 to 237 (IQVKNIEKHF…PATPFVFDFL (235 aa)). Residue 35-42 (GPSGCGKT) coordinates ATP.

The protein belongs to the ABC transporter superfamily. Sulfate/tungstate importer (TC 3.A.1.6) family. As to quaternary structure, the complex is composed of two ATP-binding proteins (CysA), two transmembrane proteins (CysT and CysW) and a solute-binding protein (CysP).

The protein localises to the cell inner membrane. The catalysed reaction is sulfate(out) + ATP + H2O = sulfate(in) + ADP + phosphate + H(+). It carries out the reaction thiosulfate(out) + ATP + H2O = thiosulfate(in) + ADP + phosphate + H(+). In terms of biological role, part of the ABC transporter complex CysAWTP involved in sulfate/thiosulfate import. Responsible for energy coupling to the transport system. In Acinetobacter baylyi (strain ATCC 33305 / BD413 / ADP1), this protein is Sulfate/thiosulfate import ATP-binding protein CysA.